Consider the following 371-residue polypeptide: MSAQAQMRALLDQLMGTARDGDETRQRVKFTDDRVCKSHLLDCCPHDILAGTRMDLGECTKIHDLALRADYEIASKERDLFFELDAMDHLESFIAECDRRTELAKKRLAETQEEISAEVSAKAEKVHELNEEIGKLLAKAEQLGAEGNVDESQKILMEVEKVRAKKKEAEEEYRNSMPASSFQQQKLRVCEVCSAYLGLHDNDRRLADHFGGKLHLGFIQIREKLDQLRKTVAEKQEKRNQDRLRRREEREREERLSRRSGSRTRDRRRSRSRDRRRRRSRSTSRERRKLSRSRSRDRHRRHRSRSRSHSRGHRRASRDRSAKYKFSRERASREESWESGRSERGPPDWRLESSNGKMASRRSEEKEAGEI.

2 coiled-coil regions span residues 87-177 and 218-259; these read MDHL…RNSM and FIQI…LSRR. A compositionally biased stretch (basic and acidic residues) spans 232–257; that stretch reads VAEKQEKRNQDRLRRREEREREERLS. Residues 232–371 form a disordered region; sequence VAEKQEKRNQ…RSEEKEAGEI (140 aa). Residues 258–317 show a composition bias toward basic residues; the sequence is RRSGSRTRDRRRSRSRDRRRRRSRSTSRERRKLSRSRSRDRHRRHRSRSRSHSRGHRRAS. Basic and acidic residues-rich tracts occupy residues 318–351 and 361–371; these read RDRSAKYKFSRERASREESWESGRSERGPPDWRL and RRSEEKEAGEI. 3 positions are modified to phosphoserine: Ser332, Ser336, and Ser363.

It belongs to the Luc7 family. Ubiquitous.

May bind to RNA via its Arg/Ser-rich domain. In Homo sapiens (Human), this protein is Putative RNA-binding protein Luc7-like 1 (LUC7L).